The primary structure comprises 147 residues: Large ribosomal subunit protein uL16 (147 aa).

The tract at residues 1-20 (MLMPKKVKHRKVQRGRMKGK) is disordered.

Belongs to the universal ribosomal protein uL16 family. Part of the 50S ribosomal subunit.

Functionally, binds 23S rRNA and is also seen to make contacts with the A and possibly P site tRNAs. This chain is Large ribosomal subunit protein uL16, found in Clostridium kluyveri (strain ATCC 8527 / DSM 555 / NBRC 12016 / NCIMB 10680 / K1).